The following is a 416-amino-acid chain: PRKCA-binding protein (416 aa).

One can recognise a PDZ domain in the interval 22–105; it reads KVTLQKDAQN…EVTIHYNKLQ (84 aa). The Zn(2+) site is built by C44 and C46. Position 82 is a phosphothreonine (T82). The AH domain occupies 144-357; it reads LCNDGLVKRL…CYAVLQDADV (214 aa). The interval 373-416 is disordered; sequence PNQGSFTDGEEEDEEEEDGAAREVSKDACGATGPTDKGGSWCDS. A compositionally biased stretch (acidic residues) spans 380–390; that stretch reads DGEEEDEEEED. Residue C414 is the site of S-palmitoyl cysteine; by DHHC8 attachment.

Monomer and homodimer. Interacts with CXADR. Interacts presynaptically with the glutamate receptors GRIA2, GRIA3, GRIK3, isoform 3 of GRIA4, isoform A of GRM4, GRM7 and GRM8; with NAPA and NAPB; and with BTG2. The interaction with NAPA and NAPB disrupts the interaction with GRIA2, conducting to the internalization of GRIA2. Interacts with PRKCA; with the amine transporters SLC6A2 and SLC6A3; with the channels ASIC1 and ASIC2; with the GTP-binding proteins ARF1 and ARF3; with the ephrin receptor tyrosine kinases EPHA7, EPHB1 and EPHB2; with ERBB2 and through its PDZ domain with the C-terminal tail of PRLHR. Interacts with UNC5A. Interacts (via AH domain) with NCS1/FREQ; in a calcium-dependent manner. Interacts with F-actin and associates with the ARP2/3 complex. Interacts (via PDZ domain) with ARF1 (activated); the interaction blocks Arp2/3 complex inhibition. Interacts with SORCS3. In terms of processing, phosphorylation at Thr-82 appears to inhibit the interaction with AMPA receptors. Phosphorylated on tyrosine residues by EPHB2 and on serine or threonine residues by PKC. Post-translationally, palmitoylation on Cys-414 is essential for long-term synaptic depression (LTD). In terms of tissue distribution, expressed in all tissues examined, with highest levels in brain and testes and lowest levels in lung.

It is found in the cytoplasm. The protein localises to the perinuclear region. It localises to the membrane. Its subcellular location is the postsynaptic density. The protein resides in the synapse. It is found in the synaptosome. The protein localises to the cytoskeleton. Probable adapter protein that bind to and organize the subcellular localization of a variety of membrane proteins containing some PDZ recognition sequence. Involved in the clustering of various receptors, possibly by acting at the receptor internalization level. Plays a role in synaptic plasticity by regulating the trafficking and internalization of AMPA receptors. May be regulated upon PRKCA activation. May regulate ASIC1/ASIC3 channel. Regulates actin polymerization by inhibiting the actin-nucleating activity of the Arp2/3 complex; the function is competitive with nucleation promoting factors and is linked to neuronal morphology regulation and AMPA receptor (AMPAR) endocytosis. Via interaction with the Arp2/3 complex involved in regulation of synaptic plasicity of excitatory synapses and required for spine shrinkage during long-term depression (LTD). Involved in regulation of astrocyte morphology, antagonistic to Arp2/3 complex activator WASL/N-WASP function. This Mus musculus (Mouse) protein is PRKCA-binding protein (Pick1).